The sequence spans 152 residues: Vasotocin-neurophysin VT 1 (152 aa).

Residues 1 to 19 (MSDSFLPTCILCLLALSSA) form the signal peptide. A disulfide bridge links Cys-20 with Cys-25. Gly-28 bears the Glycine amide mark. 7 cysteine pairs are disulfide-bonded: Cys-40-Cys-84, Cys-43-Cys-57, Cys-51-Cys-74, Cys-58-Cys-64, Cys-91-Cys-103, Cys-97-Cys-115, and Cys-104-Cys-109.

It belongs to the vasopressin/oxytocin family.

It localises to the secreted. Functionally, vasotocin is an antidiuretic hormone. This is Vasotocin-neurophysin VT 1 from Catostomus commersonii (White sucker).